The primary structure comprises 663 residues: DNA topoisomerase 4 subunit B (663 aa).

ATP contacts are provided by residues Tyr7, Asn47, Asp74, 114–120 (GLHGVGA), and Lys341. Positions 386–416 (REAARKAREDARSGKKNKRKDTLLSGKLTPA) are disordered. Positions 387-398 (EAARKAREDARS) are enriched in basic and acidic residues. Positions 424 to 538 (NELYLVEGDS…AGRVFIALPP (115 aa)) constitute a Toprim domain. 3 residues coordinate Mg(2+): Glu430, Asp503, and Asp505.

Belongs to the type II topoisomerase family. ParE type 2 subfamily. Heterotetramer composed of ParC and ParE. The cofactor is Mg(2+). Mn(2+) serves as cofactor. Ca(2+) is required as a cofactor.

It catalyses the reaction ATP-dependent breakage, passage and rejoining of double-stranded DNA.. In terms of biological role, topoisomerase IV is essential for chromosome segregation. It relaxes supercoiled DNA. Performs the decatenation events required during the replication of a circular DNA molecule. The protein is DNA topoisomerase 4 subunit B of Staphylococcus aureus (strain NCTC 8325 / PS 47).